Consider the following 243-residue polypeptide: MRYLVDTHTHTIVSGHAYTTFLENVQEASNIGLKVLGTTDHGPSMPGGPNLFYFNNFKVMPRKLKGVTLLHGCEANIIDFKGMLDIPDFTQKKLDVIIASLHDVCIRPGSVEENTEALINVMENPYVDILGHIGNPSFPINEEVVVKKAKEKNVLIEINNGSFVSRKGSEETCKKVANLCKKHKVNIIVGSDSHVCFQIGRFPKADNMLKEIGMPEELIINNEENKILKYLKNKGKLKDLNLD.

9 residues coordinate Zn(2+): His-8, His-10, His-16, His-41, Glu-74, His-102, His-132, Asp-192, and His-194.

The protein belongs to the PHP family. The cofactor is Zn(2+).

The polypeptide is Probable phosphatase CBO3379/CLC_3322 (Clostridium botulinum (strain Hall / ATCC 3502 / NCTC 13319 / Type A)).